The sequence spans 349 residues: Putative nuclease HARBI1 (349 aa).

A DDE Tnp4 domain is found at 148 to 300 (VDCMHVAIKA…IILACCVLHN (153 aa)). Residues aspartate 149, aspartate 199, aspartate 225, and glutamate 261 each coordinate a divalent metal cation.

Belongs to the HARBI1 family. As to quaternary structure, interacts with NAIF1. Requires a divalent metal cation as cofactor. As to expression, detected in brain.

It is found in the nucleus. The protein localises to the cytoplasm. Transposase-derived protein that may have nuclease activity (Potential). Does not have transposase activity. This is Putative nuclease HARBI1 (HARBI1) from Bos taurus (Bovine).